Reading from the N-terminus, the 56-residue chain is Small ribosomal subunit protein uS14 (56 aa).

4 residues coordinate Zn(2+): Cys-21, Cys-24, Cys-39, and Cys-42.

This sequence belongs to the universal ribosomal protein uS14 family. As to quaternary structure, component of the 40S small ribosomal subunit. Zn(2+) is required as a cofactor.

It is found in the cytoplasm. The protein localises to the cytosol. Its subcellular location is the rough endoplasmic reticulum. This chain is Small ribosomal subunit protein uS14 (RpS29), found in Lysiphlebus testaceipes (Greenbugs aphid parastoid).